The following is a 425-amino-acid chain: MSAHQLPACVIDNGTGYTKLGYAGNTEPQFIIPSAIAVKDKVASSNSQAMRWNNRVGAGIDDLDFFIGDEALSPAATNYTVKYPIRHGIVEDWDLMERYWEQCIFKYLRAEPEDHFFLLTEPPLNTPENREYTAEIMFESFNVPGLYIAVQAVLALTASWNSREANERSLTGLVIDSGDGVTHCIPVADGYVIGSCIKHIPIAGRDITYFIQSLLRDREHTIPAEQSYEVAKMIKEKFCYVCPDVMKEFVKYDTDAAKWLRTYDGINSITKKPFNVDVGYERFLGPEIFFHPEFCNPEFTTPISDTIDTLIQQCPIDVRRGLYENIVLSGGSTMFKDFARKLQRDVKRLSDGRLQMSETLSGGRLKPKPIDVQVISHKMQRYAVWFGGSMLASTSEFYQVSHTKAEYMERGPSICRYNPVFGALT.

It belongs to the actin family. ARP3 subfamily. As to quaternary structure, component of the Arp2/3 complex, at least composed of arx-1, arx-2, arx-4 and arx-6.

Its subcellular location is the cytoplasm. It is found in the cytoskeleton. Functions as ATP-binding component of the Arp2/3 complex which is involved in regulation of actin polymerization and together with an activating nucleation-promoting factor (NPF) mediates the formation of branched actin networks. Seems to contact the pointed end of the daughter actin filament. Plays a role in time-dependent memory loss and the retention of conditioned behavior over time. The sequence is that of Actin-related protein 3 from Caenorhabditis elegans.